Consider the following 301-residue polypeptide: Acetylglutamate kinase (301 aa).

Residues 68-69 (GG), Arg-90, and Asn-197 contribute to the substrate site.

It belongs to the acetylglutamate kinase family. ArgB subfamily.

It localises to the cytoplasm. The enzyme catalyses N-acetyl-L-glutamate + ATP = N-acetyl-L-glutamyl 5-phosphate + ADP. It participates in amino-acid biosynthesis; L-arginine biosynthesis; N(2)-acetyl-L-ornithine from L-glutamate: step 2/4. Catalyzes the ATP-dependent phosphorylation of N-acetyl-L-glutamate. This Nitrosococcus oceani (strain ATCC 19707 / BCRC 17464 / JCM 30415 / NCIMB 11848 / C-107) protein is Acetylglutamate kinase.